The primary structure comprises 504 residues: Maturase K (504 aa).

This sequence belongs to the intron maturase 2 family. MatK subfamily.

It localises to the plastid. The protein resides in the chloroplast. Its function is as follows. Usually encoded in the trnK tRNA gene intron. Probably assists in splicing its own and other chloroplast group II introns. In Adansonia digitata (Baobab tree), this protein is Maturase K.